Consider the following 2157-residue polypeptide: Mediator of RNA polymerase II transcription subunit 12-like protein (2157 aa).

The disordered stretch occupies residues 1 to 31; it reads MAAFGLLSYEQRPLKRPRLGPPDVYPQDPKQ. Residue threonine 462 is modified to Phosphothreonine. Basic and acidic residues predominate over residues 1437–1456; that stretch reads ELEKGQHLGSSSKKERDRQK. 3 disordered regions span residues 1437 to 1461, 1724 to 1807, and 2040 to 2157; these read ELEKGQHLGSSSKKERDRQKQKSMS, RSYY…SQMT, and IDAV…PSHF. Residues 1771–1780 show a composition bias toward basic residues; sequence TKGRKRKTKS. 3 stretches are compositionally biased toward low complexity: residues 2063–2076, 2083–2101, and 2116–2136; these read PRQQQVRQQQRLLQ, QQPQQAPQPQQPSQTQSQA, and RQGLQQTQQQQQTAALVRQLQ. The span at 2137–2148 shows a compositional bias: polar residues; the sequence is KQLSSNQPQQGV.

The protein belongs to the Mediator complex subunit 12 family. May be a component of the Mediator complex, which is known to be composed of MED1, MED4, MED6, MED7, MED8, MED9, MED10, MED11, MED12, MED13, MED13L, MED14, MED15, MED16, MED17, MED18, MED19, MED20, MED21, MED22, MED23, MED24, MED25, MED26, MED27, MED29, MED30, MED31, CCNC, CDK8 and CDC2L6/CDK11. The MED12, MED13, CCNC and CDK8 subunits form a distinct module termed the CDK8 module. Mediator containing the CDK8 module is less active than Mediator lacking this module in supporting transcriptional activation. Individual preparations of the Mediator complex lacking one or more distinct subunits have been variously termed ARC, CRSP, DRIP, PC2, SMCC and TRAP.

Its subcellular location is the nucleus. Its function is as follows. May be a component of the Mediator complex, a coactivator involved in the regulated transcription of nearly all RNA polymerase II-dependent genes. Mediator functions as a bridge to convey information from gene-specific regulatory proteins to the basal RNA polymerase II transcription machinery. Mediator is recruited to promoters by direct interactions with regulatory proteins and serves as a scaffold for the assembly of a functional preinitiation complex with RNA polymerase II and the general transcription factors. This chain is Mediator of RNA polymerase II transcription subunit 12-like protein (Med12l), found in Mus musculus (Mouse).